The sequence spans 219 residues: 2-hydroxy-3-keto-5-methylthiopentenyl-1-phosphate phosphatase (219 aa).

This sequence belongs to the HAD-like hydrolase superfamily. MtnX family.

It catalyses the reaction 2-hydroxy-5-methylsulfanyl-3-oxopent-1-enyl phosphate + H2O = 1,2-dihydroxy-5-(methylsulfanyl)pent-1-en-3-one + phosphate. It participates in amino-acid biosynthesis; L-methionine biosynthesis via salvage pathway; L-methionine from S-methyl-5-thio-alpha-D-ribose 1-phosphate: step 4/6. Its function is as follows. Dephosphorylates 2-hydroxy-3-keto-5-methylthiopentenyl-1-phosphate (HK-MTPenyl-1-P) yielding 1,2-dihydroxy-3-keto-5-methylthiopentene (DHK-MTPene). The protein is 2-hydroxy-3-keto-5-methylthiopentenyl-1-phosphate phosphatase of Bacillus cereus (strain ATCC 10987 / NRS 248).